Here is a 373-residue protein sequence, read N- to C-terminus: Enoyl-[acyl-carrier-protein] reductase, mitochondrial (373 aa).

The N-terminal 53 residues, 1 to 53, are a transit peptide targeting the mitochondrion; sequence MWVCGALCRTRAPAQLGQRLLPESRRRRPASASFSASAEPSRVRALVYGHHGD. Lys-61 is subject to N6-acetyllysine; alternate. Lys-61 is subject to N6-succinyllysine; alternate. Tyr-94 acts as the Proton donor in catalysis. NADP(+)-binding positions include Asn-167, 193 to 196, and 216 to 218; these read NSGV and RDT. An N6-acetyllysine; alternate mark is found at Lys-252 and Lys-267. N6-succinyllysine; alternate occurs at positions 252 and 267. NADP(+) contacts are provided by residues 285–288 and 310–312; these read YGGM and FWL. Lys-316 is modified (N6-succinyllysine). An NADP(+)-binding site is contributed by Lys-368.

The protein belongs to the zinc-containing alcohol dehydrogenase family. Quinone oxidoreductase subfamily. Homodimer.

The protein resides in the mitochondrion. The enzyme catalyses a 2,3-saturated acyl-[ACP] + NADP(+) = a (2E)-enoyl-[ACP] + NADPH + H(+). It carries out the reaction (2E)-butenoyl-[ACP] + NADPH + H(+) = butanoyl-[ACP] + NADP(+). It catalyses the reaction (2E)-hexenoyl-[ACP] + NADPH + H(+) = hexanoyl-[ACP] + NADP(+). The catalysed reaction is (2E)-octenoyl-[ACP] + NADPH + H(+) = octanoyl-[ACP] + NADP(+). The enzyme catalyses (2E)-decenoyl-[ACP] + NADPH + H(+) = decanoyl-[ACP] + NADP(+). It carries out the reaction (2E)-dodecenoyl-[ACP] + NADPH + H(+) = dodecanoyl-[ACP] + NADP(+). It catalyses the reaction (2E)-tetradecenoyl-[ACP] + NADPH + H(+) = tetradecanoyl-[ACP] + NADP(+). The catalysed reaction is (2E)-hexadecenoyl-[ACP] + NADPH + H(+) = hexadecanoyl-[ACP] + NADP(+). Functionally, catalyzes the NADPH-dependent reduction of trans-2-enoyl thioesters in mitochondrial fatty acid synthesis (fatty acid synthesis type II). Fatty acid chain elongation in mitochondria uses acyl carrier protein (ACP) as an acyl group carrier, but the enzyme accepts both ACP and CoA thioesters as substrates in vitro. Displays a preference for medium-chain over short- and long-chain substrates. May provide the octanoyl chain used for lipoic acid biosynthesis, regulating protein lipoylation and mitochondrial respiratory activity particularly in Purkinje cells. Involved in iron homeostasis; affecting Fe-S cluster assembly and ceramide metabolism. Required for proper morphology and bioenergetic functions of mitochondria. Required for maintenance of neurons. The sequence is that of Enoyl-[acyl-carrier-protein] reductase, mitochondrial (MECR) from Bos taurus (Bovine).